Reading from the N-terminus, the 293-residue chain is Formamidopyrimidine-DNA glycosylase (293 aa).

The Schiff-base intermediate with DNA role is filled by proline 2. The active-site Proton donor is the glutamate 3. The active-site Proton donor; for beta-elimination activity is lysine 58. The DNA site is built by histidine 104, arginine 123, and arginine 166. An FPG-type zinc finger spans residues 257-293; that stretch reads KVYDREGEPCPTLRCKGHVQRIVQAGRSTFFCATCQR. Catalysis depends on arginine 283, which acts as the Proton donor; for delta-elimination activity.

This sequence belongs to the FPG family. In terms of assembly, monomer. Zn(2+) is required as a cofactor.

The enzyme catalyses Hydrolysis of DNA containing ring-opened 7-methylguanine residues, releasing 2,6-diamino-4-hydroxy-5-(N-methyl)formamidopyrimidine.. It catalyses the reaction 2'-deoxyribonucleotide-(2'-deoxyribose 5'-phosphate)-2'-deoxyribonucleotide-DNA = a 3'-end 2'-deoxyribonucleotide-(2,3-dehydro-2,3-deoxyribose 5'-phosphate)-DNA + a 5'-end 5'-phospho-2'-deoxyribonucleoside-DNA + H(+). Its function is as follows. Involved in base excision repair of DNA damaged by oxidation or by mutagenic agents. Acts as a DNA glycosylase that recognizes and removes damaged bases. Has a preference for oxidized purines, such as 7,8-dihydro-8-oxoguanine (8-oxoG). Has AP (apurinic/apyrimidinic) lyase activity and introduces nicks in the DNA strand. Cleaves the DNA backbone by beta-delta elimination to generate a single-strand break at the site of the removed base with both 3'- and 5'-phosphates. The protein is Formamidopyrimidine-DNA glycosylase of Azorhizobium caulinodans (strain ATCC 43989 / DSM 5975 / JCM 20966 / LMG 6465 / NBRC 14845 / NCIMB 13405 / ORS 571).